We begin with the raw amino-acid sequence, 200 residues long: MLQSQPIRRKLVVVGDGACGKTSLLSVFTLGYFPTEYVPTVFENYVSDCRVDGKSVQLALWDTAGQEEYERLRPMSYAKAHIILVGFAIDSPDSLENVSTKWIEEINTLCPNVPFILVGMKADLRSDPVAIEEMRRRNQNFVKSQQAELVAQRIGARKYMECSSLTGDGVDDVFEAATRAALTVRDSENDKSSTKCCIIS.

15-22 is a GTP binding site; sequence GDGACGKT. An Effector region motif is present at residues 37-45; the sequence is YVPTVFENY. Residues 62–66 and 120–123 each bind GTP; these read DTAGQ and MKAD. C197 carries the post-translational modification Cysteine methyl ester. Residue C197 is the site of S-geranylgeranyl cysteine attachment. Positions 198 to 200 are cleaved as a propeptide — removed in mature form; that stretch reads IIS.

The protein belongs to the small GTPase superfamily. Rho family. As to quaternary structure, interacts with pck2.

It localises to the cell membrane. Involved in cell morphogenesis, the maintenance of growth direction, control of polarity and of cell wall integrity. Regulates the synthesis of alpha-D-glucan through activation of pck2. The sequence is that of GTP-binding protein rho2 (rho2) from Schizosaccharomyces pombe (strain 972 / ATCC 24843) (Fission yeast).